A 588-amino-acid polypeptide reads, in one-letter code: Sentrin-specific protease 2 (588 aa).

The Nuclear localization signal motif lies at 28 to 31 (KRRR). A Phosphoserine modification is found at Ser-32. The Nuclear localization signal motif lies at 47–52 (PAKRPR). Residues 157–184 (EGYNRRPSGRRHSKSNPESSLTWKPQEQ) form a disordered region. Positions 172-184 (NPESSLTWKPQEQ) are enriched in polar residues. The Nuclear export signal motif lies at 316–331 (MEPDLSEEVSARLRLG). A phosphoserine mark is found at Ser-332 and Ser-343. The tract at residues 394-558 (LRITRGDIQT…MFTCKYADYI (165 aa)) is protease. Residues His-477 and Asp-494 contribute to the active site. Catalysis depends on Cys-547, which acts as the Nucleophile.

The protein belongs to the peptidase C48 family. In terms of assembly, binds to SUMO2 and SUMO3. Interacts with the C-terminal domain of NUP153 via its N-terminus. Interacts with MTA1. Post-translationally, polyubiquitinated; which leads to proteasomal degradation. Highly expressed in testis. Detected in brain, heart and thymus.

It localises to the nucleus. Its subcellular location is the nuclear pore complex. The protein localises to the nucleus membrane. The protein resides in the cytoplasm. It is found in the cytoplasmic vesicle. It localises to the PML body. Protease that catalyzes two essential functions in the SUMO pathway. The first is the hydrolysis of an alpha-linked peptide bond at the C-terminal end of the small ubiquitin-like modifier (SUMO) propeptides, SUMO1, SUMO2 and SUMO3 leading to the mature form of the proteins. The second is the deconjugation of SUMO1, SUMO2 and SUMO3 from targeted proteins, by cleaving an epsilon-linked peptide bond between the C-terminal glycine of the mature SUMO and the lysine epsilon-amino group of the target protein. May down-regulate CTNNB1 levels and thereby modulate the Wnt pathway. Deconjugates SUMO2 from MTA1. Plays a dynamic role in adipogenesis by desumoylating and promoting the stabilization of CEBPB. Acts as a regulator of the cGAS-STING pathway by catalyzing desumoylation of CGAS and STING1 during the late phase of viral infection. In terms of biological role, activates transcription. The sequence is that of Sentrin-specific protease 2 (Senp2) from Mus musculus (Mouse).